The sequence spans 784 residues: MGSDWDEIKRLAADFQKAQLTSTLQKLSERNCVEIVTLLLEKQLLDVVFTVDGKEYITPDHLEREIQDELYVNGGRANLVEVSKALNVDLSRVVSLAERIAAENPSIHLELGQLIDEEYITHIAQEINEKLALRGEISISELASQFDLPSEFLQHKVVEKHLGKIIKGRQDTTNPRVFFTQAYIQRCKAKIRGALAAITRPTNVAVILQQIGVQEKIFHSLLDEIAPAGQVTSKMANAQYVPHVYAKTQSDWVSSFYKQNSFLEYDAIQKLGISDPKTYIRKQFPSEEFLFLKRVALGARLVELTVVTALNECSATKQYLDLSSILPSNLSEEDIEEVFAAIMAQKQSNPSNFVYLDSIVFSQPYLQQLVQPCQALAETQAKAAIDSGIYQQHIVEKTLAQKGNSSAQDLEDDGKVDKRDERRKKAASGKAGGGAQGRETKTKSTKKHARGRAAAAQNDSDDDEDVHQNTKGGGGGGNKKTVKPLELVKTADIVKLITATLEEEGLEHLAKSIASLYTSQFNQTALARAQELFEATPQTNRRQTHAAIQDRINTLLVDIRLYEKGLKLLPQDTQTQLVKYLLKSLGNDICNELSLYVAAECNLTVKNSNLNVDQRNKLAQECDAQYRSALLEQNKALNKSIDEFELATEAVLKACSMIIKKVDKKKDRLLIADHKKKLQEQLLECNDPALLLHLAALILFTTISGCILHASGKFVSAILQHIRGSLSDPQNALLLRYHDLVLQVLQSAADSSESKIAHEQLQAMQTEVIDLAQNYSRASVSKAD.

Residues 401-481 are disordered; the sequence is QKGNSSAQDL…GGGGGGNKKT (81 aa).

This sequence belongs to the UFL1 family.

E3 UFM1-protein ligase that mediates ufmylation of target proteins. This chain is E3 UFM1-protein ligase 1 homolog, found in Drosophila ananassae (Fruit fly).